The chain runs to 773 residues: Ethylene receptor 2 (773 aa).

4 helical membrane-spanning segments follow: residues 4 to 24, 53 to 73, 82 to 102, and 122 to 142; these read EIASWLLILSMVVFVSPVLAI, VSDFLIAVAYFSIPIELLYFV, WVLFEFIAFIVLCGMTHLLHG, and LTALVSCATAITLITLIPLLL. The Cu cation site is built by Cys94 and His98. One can recognise a GAF domain in the interval 187–331; the sequence is DRHTILYTTL…VVADQVTVAL (145 aa). One can recognise a Histidine kinase domain in the interval 374–614; it reads TMSEGMRRPM…PETMSLLLRF (241 aa). The 120-residue stretch at 647 to 766 folds into the Response regulatory domain; it reads QVLLVDTNDS…AMESELRRVL (120 aa). Asp702 bears the 4-aspartylphosphate mark. A Glycyl lysine isopeptide (Lys-Gly) (interchain with G-Cter in ubiquitin) cross-link involves residue Lys751.

This sequence belongs to the ethylene receptor family. In terms of assembly, heteromer with ETR1. Binds to MRF3/ECIP1. Cu cation serves as cofactor. Autophosphorylated predominantly on Ser residues. Expressed in seedlings, roots, leaves, flowers, mature siliques, shoot apical meristems, leaf primordia, inflorescence meristems, young floral meristems, developing petals, carpels and ovules. Low expression in stamens.

The protein localises to the endoplasmic reticulum membrane. In terms of biological role, ethylene receptor related to bacterial two-component regulators. Acts as a redundant negative regulator of ethylene signaling. The sequence is that of Ethylene receptor 2 from Arabidopsis thaliana (Mouse-ear cress).